The sequence spans 258 residues: Indole-3-glycerol phosphate synthase (258 aa).

Belongs to the TrpC family.

The enzyme catalyses 1-(2-carboxyphenylamino)-1-deoxy-D-ribulose 5-phosphate + H(+) = (1S,2R)-1-C-(indol-3-yl)glycerol 3-phosphate + CO2 + H2O. It functions in the pathway amino-acid biosynthesis; L-tryptophan biosynthesis; L-tryptophan from chorismate: step 4/5. This Chlorobium phaeobacteroides (strain DSM 266 / SMG 266 / 2430) protein is Indole-3-glycerol phosphate synthase.